Here is a 1035-residue protein sequence, read N- to C-terminus: DNA polymerase I B, mitochondrial (1035 aa).

The N-terminal 42 residues, M1–A42, are a transit peptide targeting the mitochondrion. Residues T100–Y124 are disordered. The span at L111–R120 shows a compositional bias: basic and acidic residues. In terms of domain architecture, 3'-5' exonuclease spans F317–E478. A polymerase region spans residues H699–Y1032.

The protein belongs to the DNA polymerase type-A family.

The protein resides in the mitochondrion. The enzyme catalyses DNA(n) + a 2'-deoxyribonucleoside 5'-triphosphate = DNA(n+1) + diphosphate. With respect to regulation, not inhibited by aphidicolin. Functionally, in addition to polymerase activity, this DNA polymerase exhibits 5'-3' exonuclease activity. May be required for DNA replication and accumulation in mitochondria. The sequence is that of DNA polymerase I B, mitochondrial from Oryza sativa subsp. japonica (Rice).